Reading from the N-terminus, the 79-residue chain is ATP synthase subunit c (79 aa).

2 consecutive transmembrane segments (helical) span residues 11–31 (MAAA…IGIL) and 53–73 (FFIV…LGLY).

It belongs to the ATPase C chain family. In terms of assembly, F-type ATPases have 2 components, F(1) - the catalytic core - and F(0) - the membrane proton channel. F(1) has five subunits: alpha(3), beta(3), gamma(1), delta(1), epsilon(1). F(0) has three main subunits: a(1), b(2) and c(10-14). The alpha and beta chains form an alternating ring which encloses part of the gamma chain. F(1) is attached to F(0) by a central stalk formed by the gamma and epsilon chains, while a peripheral stalk is formed by the delta and b chains.

It is found in the cell inner membrane. In terms of biological role, f(1)F(0) ATP synthase produces ATP from ADP in the presence of a proton or sodium gradient. F-type ATPases consist of two structural domains, F(1) containing the extramembraneous catalytic core and F(0) containing the membrane proton channel, linked together by a central stalk and a peripheral stalk. During catalysis, ATP synthesis in the catalytic domain of F(1) is coupled via a rotary mechanism of the central stalk subunits to proton translocation. Functionally, key component of the F(0) channel; it plays a direct role in translocation across the membrane. A homomeric c-ring of between 10-14 subunits forms the central stalk rotor element with the F(1) delta and epsilon subunits. The polypeptide is ATP synthase subunit c (Serratia proteamaculans (strain 568)).